We begin with the raw amino-acid sequence, 185 residues long: Large ribosomal subunit protein uL13 (185 aa).

The protein belongs to the universal ribosomal protein uL13 family. Part of the 50S ribosomal subunit.

Its function is as follows. This protein is one of the early assembly proteins of the 50S ribosomal subunit, although it is not seen to bind rRNA by itself. It is important during the early stages of 50S assembly. This is Large ribosomal subunit protein uL13 from Pyrobaculum islandicum (strain DSM 4184 / JCM 9189 / GEO3).